Reading from the N-terminus, the 184-residue chain is Photosystem I assembly protein Ycf4 (184 aa).

The next 2 membrane-spanning stretches (helical) occupy residues 22–42 (FCWA…GTSS) and 57–77 (ILFF…LFIS).

Belongs to the Ycf4 family.

It localises to the plastid. The protein resides in the chloroplast thylakoid membrane. Its function is as follows. Seems to be required for the assembly of the photosystem I complex. The polypeptide is Photosystem I assembly protein Ycf4 (Liriodendron tulipifera (Tuliptree)).